We begin with the raw amino-acid sequence, 180 residues long: Succinate dehydrogenase cytochrome B subunit, mitochondrial (180 aa).

Residues 1-82 (MFATRSFCLS…WYLSSLHRIT (82 aa)) lie on the Mitochondrial matrix side of the membrane. Residues 83 to 103 (GCVVAGTLYAFAMGYLVAPLA) form a helical membrane-spanning segment. Residues 104 to 122 (GYSLDTATISGLIQQVPTW) lie on the Mitochondrial intermembrane side of the membrane. Residues 123–143 (IKVPAKFVISYPLTFHIFNGI) form a helical membrane-spanning segment. His-138 is a heme binding site. Residues 144-159 (RHLIWDTTKELSLKGV) are Mitochondrial matrix-facing. Residues 160–180 (YRTGYAVLALSVLTSGYFAMI) traverse the membrane as a helical segment.

It belongs to the cytochrome b560 family. In terms of assembly, forms part of complex II containing four subunits: a 70 kDa flavoprotein (FP), a 27 kDa iron-sulfur protein (IP), a cytochrome B and a membrane-anchoring protein. Heme is required as a cofactor.

The protein resides in the mitochondrion inner membrane. Its pathway is carbohydrate metabolism; tricarboxylic acid cycle. Membrane-anchoring subunit of succinate dehydrogenase (SDH) that is involved in complex II of the mitochondrial electron transport chain and is responsible for transferring electrons from succinate to ubiquinone (coenzyme Q). This chain is Succinate dehydrogenase cytochrome B subunit, mitochondrial (sdh3), found in Schizosaccharomyces pombe (strain 972 / ATCC 24843) (Fission yeast).